Consider the following 309-residue polypeptide: MSIRIVPQEQLEQNGKSTPEGHIPPLLFANLKSLYSSRAERLRQLAADHPLGDYLTFAAGVVEAQQKVLHDHPLQLDLSNVLTQSGERPPLDIAVFPRDRHWLTLLRALIEELKPDASGQVLSTLENLEKASEQELEEQATALLQHEFHAENNDKAPFIWAALSLFWAQMASLLPGKARAVPGEHRQFCPVCGSIPVSGVVQLGTSSGLRYLHCNLCESEWHMVRVKCSNCEESSDLNYWSLDSENSAIKAESCGHCGTYLKLLYQEKDHRVEAVADDLASLVLDVKMEEEGFSRSSINPFLFPESSIE.

Residues 1 to 22 (MSIRIVPQEQLEQNGKSTPEGH) are disordered.

Belongs to the FdhE family.

Its subcellular location is the cytoplasm. Its function is as follows. Necessary for formate dehydrogenase activity. This Pectobacterium carotovorum subsp. carotovorum (strain PC1) protein is Protein FdhE homolog.